The chain runs to 429 residues: MAEETMENEERVKLFVGQVPKHMTEIQLLTLFREFSIVNEVNIIKEKTTRAPRGCCFLTCPTREDADKVINSFHNKKTLPGASSPLQVKYADGELERLEHKLFVGMLPKNVSETEVQSLFSEYGTIKDLQILRGSLQTSKGCLFLKYESKEQAVAAMEALNGRHIMEGANVPLIVKWADTEKERQARRLLKVQSHVSRLDPQNPSMFGALPMSYVPPYNGYGYHVPGTYGYMLPPIQTQHAFHNVISPNQGNGRALQGTALTESVPPRLAPRRNFPTALGNYGYHGLQYPMAFPRGMIPPRLPLTTVSPGISNNGTSIPSSLQTEGPAGANLFIYNIPREFEDQELAATFQPFGKVLSAKVFVDKATGISKCFGFISYDSQAAAQNAINTMNGCQLSGKKLKVQLKRDNGQQQQQQQSKNPLFNGLLNS.

RRM domains follow at residues 12-93, 100-180, and 330-408; these read VKLF…YADG, HKLF…WADT, and ANLF…LKRD. Residues 410–429 are disordered; the sequence is GQQQQQQQSKNPLFNGLLNS. The segment covering 418 to 429 has biased composition (polar residues); sequence SKNPLFNGLLNS.

Expressed in roots, stems, flowers and siliques.

It localises to the cytoplasm. In terms of biological role, RNA-binding protein involved in the regulation of flowering time. Acts as a repressor of the activity of SOC1, a transcriptional activator of flowering time. Binds to the 3'-UTR of SOC1 mRNA in the cytoplasm and participates in SOC1 mRNA decay, mediated by the distal region of the SOC1 3'-UTR. The polypeptide is RNA-binding protein BRN2 (Arabidopsis thaliana (Mouse-ear cress)).